We begin with the raw amino-acid sequence, 318 residues long: ADP-ribosyl cyclase/cyclic ADP-ribose hydrolase 2 (318 aa).

The first 32 residues, 1–32, serve as a signal peptide directing secretion; that stretch reads MAAQGCAASRLLQLLLQLLLLLLLLAAGGARA. Intrachain disulfides connect Cys51/Cys67, Cys83/Cys163, and Cys144/Cys157. Asn66 and Asn95 each carry an N-linked (GlcNAc...) asparagine glycan. NAD(+) is bound at residue Trp109. Trp109 is a binding site for nicotinamide. An N-linked (GlcNAc...) asparagine glycan is attached at Asn148. NAD(+) is bound at residue Trp172. Asn192 is a glycosylation site (N-linked (GlcNAc...) asparagine). An NAD(+)-binding site is contributed by Glu210. 2 cysteine pairs are disulfide-bonded: Cys238-Cys259 and Cys271-Cys280. A lipid anchor (GPI-anchor amidated alanine) is attached at Ala293. The propeptide at 294-318 is removed in mature form; it reads PSLYTEQRAGLIIPLFLVLASRTQL.

It belongs to the ADP-ribosyl cyclase family. Homodimer. As to expression, expressed in various tissues including placenta, lung, liver and kidney.

The protein localises to the cell membrane. It carries out the reaction NAD(+) + H2O = ADP-D-ribose + nicotinamide + H(+). The enzyme catalyses NAD(+) = cyclic ADP-beta-D-ribose + nicotinamide + H(+). It catalyses the reaction cyclic ADP-beta-D-ribose + H2O = ADP-D-ribose. With respect to regulation, ADP-ribosyl cyclase and cADPR hydrolase activities are both activated by Zn(2+) or Mn(2+), and inhibited by Cu(2+), while Mg(2+) and Ca(2+) do not have any significant influence. Functionally, catalyzes both the synthesis of cyclic ADP-beta-D-ribose (cADPR) from NAD(+), and its hydrolysis to ADP-D-ribose (ADPR). Cyclic ADPR is known to serve as an endogenous second messenger that elicits calcium release from intracellular stores, and thus regulates the mobilization of intracellular calcium. May be involved in pre-B-cell growth. This chain is ADP-ribosyl cyclase/cyclic ADP-ribose hydrolase 2 (BST1), found in Homo sapiens (Human).